The primary structure comprises 284 residues: Shikimate dehydrogenase (NADP(+)) (284 aa).

Shikimate-binding positions include 23-25 (SLS) and Thr-70. The Proton acceptor role is filled by Lys-74. Glu-86 contributes to the NADP(+) binding site. Shikimate-binding residues include Asn-95 and Asp-111. NADP(+)-binding positions include 135–139 (GAGGA), 159–164 (NRTPGR), and Ala-227. Tyr-229 is a binding site for shikimate. Gly-251 is an NADP(+) binding site.

Belongs to the shikimate dehydrogenase family. In terms of assembly, homodimer.

It carries out the reaction shikimate + NADP(+) = 3-dehydroshikimate + NADPH + H(+). It functions in the pathway metabolic intermediate biosynthesis; chorismate biosynthesis; chorismate from D-erythrose 4-phosphate and phosphoenolpyruvate: step 4/7. In terms of biological role, involved in the biosynthesis of the chorismate, which leads to the biosynthesis of aromatic amino acids. Catalyzes the reversible NADPH linked reduction of 3-dehydroshikimate (DHSA) to yield shikimate (SA). The polypeptide is Shikimate dehydrogenase (NADP(+)) (Rubrobacter xylanophilus (strain DSM 9941 / JCM 11954 / NBRC 16129 / PRD-1)).